Reading from the N-terminus, the 338-residue chain is 3-isopropylmalate dehydrogenase (338 aa).

Residues arginine 88, arginine 98, arginine 122, and aspartate 212 each contribute to the substrate site. Positions 212, 236, and 240 each coordinate Mg(2+). 272–284 (GSAPDIAGQGIAD) is an NAD(+) binding site.

Belongs to the isocitrate and isopropylmalate dehydrogenases family. LeuB type 2 subfamily. Homodimer. The cofactor is Mg(2+). Requires Mn(2+) as cofactor.

It is found in the cytoplasm. It catalyses the reaction (2R,3S)-3-isopropylmalate + NAD(+) = 4-methyl-2-oxopentanoate + CO2 + NADH. It functions in the pathway amino-acid biosynthesis; L-leucine biosynthesis; L-leucine from 3-methyl-2-oxobutanoate: step 3/4. Catalyzes the oxidation of 3-carboxy-2-hydroxy-4-methylpentanoate (3-isopropylmalate) to 3-carboxy-4-methyl-2-oxopentanoate. The product decarboxylates to 4-methyl-2 oxopentanoate. The protein is 3-isopropylmalate dehydrogenase of Corynebacterium jeikeium (strain K411).